A 78-amino-acid chain; its full sequence is Putative antitoxin PF1222 (78 aa).

Belongs to the UPF0330 family.

Its function is as follows. Possibly the antitoxin component of a type II toxin-antitoxin (TA) system. In Pyrococcus furiosus (strain ATCC 43587 / DSM 3638 / JCM 8422 / Vc1), this protein is Putative antitoxin PF1222.